A 520-amino-acid polypeptide reads, in one-letter code: Cytochrome b5 reductase 4 (520 aa).

N-acetylmethionine is present on M1. The span at 1–16 (MLNVPSQSFPGPSSQQ) shows a compositional bias: low complexity. The disordered stretch occupies residues 1 to 27 (MLNVPSQSFPGPSSQQRVASGGRSKVP). In terms of domain architecture, Cytochrome b5 heme-binding spans 54–130 (LIEVTEEELK…LKECLVGRMA (77 aa)). Positions 89 and 112 each coordinate heme. Positions 164–255 (PSSPSYDWFQ…KENTSWKCLG (92 aa)) constitute a CS domain. Residues 272 to 384 (LFYRKCQLVS…SNPEGNFIIS (113 aa)) form the FAD-binding FR-type domain. FAD-binding positions include 364 to 379 (DQLQIGDYVSVSNPEG) and 391 to 423 (DLFLLAAGTGFTPMVKVLNYALTNIPSLRKVKL).

This sequence belongs to the flavoprotein pyridine nucleotide cytochrome reductase family. FAD serves as cofactor.

The protein localises to the endoplasmic reticulum. It carries out the reaction 2 Fe(III)-[cytochrome b5] + NADH = 2 Fe(II)-[cytochrome b5] + NAD(+) + H(+). In terms of biological role, NADH-cytochrome b5 reductase involved in endoplasmic reticulum stress response pathway. Plays a critical role in protecting pancreatic beta-cells against oxidant stress, possibly by protecting the cell from excess buildup of reactive oxygen species (ROS). This chain is Cytochrome b5 reductase 4 (CYB5R4), found in Bos taurus (Bovine).